The primary structure comprises 349 residues: Cobalt-precorrin-5B C(1)-methyltransferase (349 aa).

It belongs to the CbiD family.

The catalysed reaction is Co-precorrin-5B + S-adenosyl-L-methionine = Co-precorrin-6A + S-adenosyl-L-homocysteine. It participates in cofactor biosynthesis; adenosylcobalamin biosynthesis; cob(II)yrinate a,c-diamide from sirohydrochlorin (anaerobic route): step 6/10. Its function is as follows. Catalyzes the methylation of C-1 in cobalt-precorrin-5B to form cobalt-precorrin-6A. The polypeptide is Cobalt-precorrin-5B C(1)-methyltransferase (Saccharolobus islandicus (strain L.S.2.15 / Lassen #1) (Sulfolobus islandicus)).